The chain runs to 59 residues: Large ribosomal subunit protein uL30 (59 aa).

It belongs to the universal ribosomal protein uL30 family. In terms of assembly, part of the 50S ribosomal subunit.

This is Large ribosomal subunit protein uL30 from Geotalea uraniireducens (strain Rf4) (Geobacter uraniireducens).